A 410-amino-acid chain; its full sequence is Gamma-glutamyl phosphate reductase (410 aa).

This sequence belongs to the gamma-glutamyl phosphate reductase family.

The protein resides in the cytoplasm. It catalyses the reaction L-glutamate 5-semialdehyde + phosphate + NADP(+) = L-glutamyl 5-phosphate + NADPH + H(+). The protein operates within amino-acid biosynthesis; L-proline biosynthesis; L-glutamate 5-semialdehyde from L-glutamate: step 2/2. Its function is as follows. Catalyzes the NADPH-dependent reduction of L-glutamate 5-phosphate into L-glutamate 5-semialdehyde and phosphate. The product spontaneously undergoes cyclization to form 1-pyrroline-5-carboxylate. The protein is Gamma-glutamyl phosphate reductase of Campylobacter jejuni subsp. jejuni serotype O:2 (strain ATCC 700819 / NCTC 11168).